The chain runs to 544 residues: Exodeoxyribonuclease 7 large subunit (544 aa).

The tract at residues 522-544 (PETPPKSRKADNPPEPPEQTSFL) is disordered.

It belongs to the XseA family. Heterooligomer composed of large and small subunits.

The protein localises to the cytoplasm. It carries out the reaction Exonucleolytic cleavage in either 5'- to 3'- or 3'- to 5'-direction to yield nucleoside 5'-phosphates.. Its function is as follows. Bidirectionally degrades single-stranded DNA into large acid-insoluble oligonucleotides, which are then degraded further into small acid-soluble oligonucleotides. The sequence is that of Exodeoxyribonuclease 7 large subunit from Zymomonas mobilis subsp. mobilis (strain ATCC 31821 / ZM4 / CP4).